The primary structure comprises 487 residues: Glutamyl-tRNA(Gln) amidotransferase subunit A (487 aa).

Catalysis depends on charge relay system residues Lys-78 and Ser-153. The active-site Acyl-ester intermediate is the Ser-177.

This sequence belongs to the amidase family. GatA subfamily. Heterotrimer of A, B and C subunits.

It catalyses the reaction L-glutamyl-tRNA(Gln) + L-glutamine + ATP + H2O = L-glutaminyl-tRNA(Gln) + L-glutamate + ADP + phosphate + H(+). Allows the formation of correctly charged Gln-tRNA(Gln) through the transamidation of misacylated Glu-tRNA(Gln) in organisms which lack glutaminyl-tRNA synthetase. The reaction takes place in the presence of glutamine and ATP through an activated gamma-phospho-Glu-tRNA(Gln). In Oenococcus oeni (strain ATCC BAA-331 / PSU-1), this protein is Glutamyl-tRNA(Gln) amidotransferase subunit A.